The following is a 241-amino-acid chain: Phosphoribosylaminoimidazole-succinocarboxamide synthase (241 aa).

The protein belongs to the SAICAR synthetase family.

It catalyses the reaction 5-amino-1-(5-phospho-D-ribosyl)imidazole-4-carboxylate + L-aspartate + ATP = (2S)-2-[5-amino-1-(5-phospho-beta-D-ribosyl)imidazole-4-carboxamido]succinate + ADP + phosphate + 2 H(+). The protein operates within purine metabolism; IMP biosynthesis via de novo pathway; 5-amino-1-(5-phospho-D-ribosyl)imidazole-4-carboxamide from 5-amino-1-(5-phospho-D-ribosyl)imidazole-4-carboxylate: step 1/2. This Latilactobacillus sakei subsp. sakei (strain 23K) (Lactobacillus sakei subsp. sakei) protein is Phosphoribosylaminoimidazole-succinocarboxamide synthase.